Reading from the N-terminus, the 258-residue chain is Phosphate import ATP-binding protein PstB (258 aa).

Residues Ile13–Ile253 form the ABC transporter domain. ATP is bound at residue Gly45–Ser52.

This sequence belongs to the ABC transporter superfamily. Phosphate importer (TC 3.A.1.7) family. As to quaternary structure, the complex is composed of two ATP-binding proteins (PstB), two transmembrane proteins (PstC and PstA) and a solute-binding protein (PstS).

It is found in the cell membrane. It catalyses the reaction phosphate(out) + ATP + H2O = ADP + 2 phosphate(in) + H(+). In terms of biological role, part of the ABC transporter complex PstSACB involved in phosphate import. Responsible for energy coupling to the transport system. The protein is Phosphate import ATP-binding protein PstB of Methanosarcina acetivorans (strain ATCC 35395 / DSM 2834 / JCM 12185 / C2A).